Here is a 260-residue protein sequence, read N- to C-terminus: tRNA (guanine-N(1)-)-methyltransferase (260 aa).

S-adenosyl-L-methionine-binding positions include G117 and 137–142 (LGDFVL).

Belongs to the RNA methyltransferase TrmD family. In terms of assembly, homodimer.

Its subcellular location is the cytoplasm. It catalyses the reaction guanosine(37) in tRNA + S-adenosyl-L-methionine = N(1)-methylguanosine(37) in tRNA + S-adenosyl-L-homocysteine + H(+). Functionally, specifically methylates guanosine-37 in various tRNAs. The protein is tRNA (guanine-N(1)-)-methyltransferase of Cupriavidus metallidurans (strain ATCC 43123 / DSM 2839 / NBRC 102507 / CH34) (Ralstonia metallidurans).